The primary structure comprises 213 residues: Orotate phosphoribosyltransferase (213 aa).

Residue Lys-26 coordinates 5-phospho-alpha-D-ribose 1-diphosphate. 34 to 35 (FF) serves as a coordination point for orotate. 5-phospho-alpha-D-ribose 1-diphosphate contacts are provided by residues 72–73 (YK), Arg-99, Lys-100, Lys-103, His-105, and 124–132 (DDVITAGTA). Residues Thr-128 and Arg-156 each contribute to the orotate site.

It belongs to the purine/pyrimidine phosphoribosyltransferase family. PyrE subfamily. Homodimer. The cofactor is Mg(2+).

It catalyses the reaction orotidine 5'-phosphate + diphosphate = orotate + 5-phospho-alpha-D-ribose 1-diphosphate. The protein operates within pyrimidine metabolism; UMP biosynthesis via de novo pathway; UMP from orotate: step 1/2. Its function is as follows. Catalyzes the transfer of a ribosyl phosphate group from 5-phosphoribose 1-diphosphate to orotate, leading to the formation of orotidine monophosphate (OMP). The sequence is that of Orotate phosphoribosyltransferase from Pseudomonas syringae pv. syringae (strain B728a).